Reading from the N-terminus, the 134-residue chain is Putative membrane protein insertion efficiency factor (134 aa).

Belongs to the UPF0161 family.

The protein localises to the cell inner membrane. Could be involved in insertion of integral membrane proteins into the membrane. In Rhizobium etli (strain ATCC 51251 / DSM 11541 / JCM 21823 / NBRC 15573 / CFN 42), this protein is Putative membrane protein insertion efficiency factor.